Here is a 130-residue protein sequence, read N- to C-terminus: MPNSMEEMNLRRSRRRLPRGVIHIQASFNNTIITVTDTRGRVVSWSSAGACGFKGARKSTPFAAQTAAENAIRILIDRGLKQAEVMISGPGPGRDTALRAIRRSGIVLNFVRDVTPMPHNGCRPPGKRRV.

The protein belongs to the universal ribosomal protein uS11 family. Part of the 30S ribosomal subunit.

It is found in the plastid. The polypeptide is Small ribosomal subunit protein uS11c (Aneura mirabilis (Parasitic liverwort)).